The following is a 420-amino-acid chain: Tol-Pal system protein TolB (420 aa).

Positions methionine 1 to alanine 21 are cleaved as a signal peptide.

It belongs to the TolB family. As to quaternary structure, the Tol-Pal system is composed of five core proteins: the inner membrane proteins TolA, TolQ and TolR, the periplasmic protein TolB and the outer membrane protein Pal. They form a network linking the inner and outer membranes and the peptidoglycan layer.

It localises to the periplasm. Functionally, part of the Tol-Pal system, which plays a role in outer membrane invagination during cell division and is important for maintaining outer membrane integrity. The polypeptide is Tol-Pal system protein TolB (Wolbachia pipientis wMel).